The sequence spans 137 residues: Transcription antitermination protein NusB (137 aa).

The protein belongs to the NusB family.

In terms of biological role, involved in transcription antitermination. Required for transcription of ribosomal RNA (rRNA) genes. Binds specifically to the boxA antiterminator sequence of the ribosomal RNA (rrn) operons. The protein is Transcription antitermination protein NusB of Aeromonas hydrophila subsp. hydrophila (strain ATCC 7966 / DSM 30187 / BCRC 13018 / CCUG 14551 / JCM 1027 / KCTC 2358 / NCIMB 9240 / NCTC 8049).